We begin with the raw amino-acid sequence, 130 residues long: Large ribosomal subunit protein bL17 (130 aa).

It belongs to the bacterial ribosomal protein bL17 family. In terms of assembly, part of the 50S ribosomal subunit. Contacts protein L32.

The sequence is that of Large ribosomal subunit protein bL17 from Nitrosomonas europaea (strain ATCC 19718 / CIP 103999 / KCTC 2705 / NBRC 14298).